A 202-amino-acid chain; its full sequence is Pycsar effector protein PtPycTM (202 aa).

3 consecutive transmembrane segments (helical) span residues G60–I80, L85–A105, and I181–G201.

The protein localises to the cell membrane. Functionally, pycsar (pyrimidine cyclase system for antiphage resistance) provides immunity against bacteriophage. The pyrimidine cyclase (PycC) synthesizes cyclic nucleotides in response to infection; these serve as specific second messenger signals. The signals activate the adjacent effector, leading to bacterial cell death and abortive phage infection. A clade D Pycsar system. Its function is as follows. The effector gene of a two-gene Pycsar system. Expression of this and adjacent uridylate cyclase PtPycC (AC A0A4V2JTK3) probably confers resistance to bacteriophage. The genes are probably only expressed in response to bacteriophage infection. Probably only responds to cUMP (produced by its cognate NTP cyclase), acts by impairing membrane integrity. This chain is Pycsar effector protein PtPycTM, found in Propioniciclava tarda.